The primary structure comprises 139 residues: Holo-[acyl-carrier-protein] synthase (139 aa).

Residues Asp-8 and Glu-61 each contribute to the Mg(2+) site.

Belongs to the P-Pant transferase superfamily. AcpS family. Requires Mg(2+) as cofactor.

The protein localises to the cytoplasm. It carries out the reaction apo-[ACP] + CoA = holo-[ACP] + adenosine 3',5'-bisphosphate + H(+). In terms of biological role, transfers the 4'-phosphopantetheine moiety from coenzyme A to a Ser of acyl-carrier-protein. This Nitrobacter hamburgensis (strain DSM 10229 / NCIMB 13809 / X14) protein is Holo-[acyl-carrier-protein] synthase.